A 176-amino-acid polypeptide reads, in one-letter code: Inorganic pyrophosphatase (176 aa).

The substrate site is built by Lys-30, Arg-44, and Tyr-56. The Mg(2+) site is built by Asp-66, Asp-71, and Asp-103. Tyr-142 contributes to the substrate binding site.

It belongs to the PPase family. In terms of assembly, homohexamer. Mg(2+) serves as cofactor.

It is found in the cytoplasm. The catalysed reaction is diphosphate + H2O = 2 phosphate + H(+). Functionally, catalyzes the hydrolysis of inorganic pyrophosphate (PPi) forming two phosphate ions. This chain is Inorganic pyrophosphatase, found in Escherichia coli O157:H7.